Here is a 197-residue protein sequence, read N- to C-terminus: Rac-like GTP-binding protein RAC1 (197 aa).

Position 13–20 (13–20 (GDGAVGKT)) interacts with GTP. Residues 35–43 (YVPTVFDNF) carry the Effector region motif. Residues 60-64 (DTAGQ) and 118-121 (TKLD) contribute to the GTP site. Position 194 is a cysteine methyl ester (cysteine 194). Cysteine 194 carries the S-geranylgeranyl cysteine lipid modification. A propeptide spans 195 to 197 (SIL) (removed in mature form).

It belongs to the small GTPase superfamily. Rho family.

It is found in the cytoplasm. The protein localises to the membrane. Its function is as follows. Inactive GDP-bound Rho GTPases reside in the cytosol, are found in a complex with Rho GDP-dissociation inhibitors (Rho GDIs), and are released from the GDI protein in order to translocate to membranes upon activation. This chain is Rac-like GTP-binding protein RAC1 (RAC1), found in Lotus japonicus (Lotus corniculatus var. japonicus).